Here is a 511-residue protein sequence, read N- to C-terminus: GMP synthase [glutamine-hydrolyzing] (511 aa).

The Glutamine amidotransferase type-1 domain occupies proline 5–threonine 195. The Nucleophile role is filled by cysteine 82. Catalysis depends on residues histidine 169 and glutamate 171. The 191-residue stretch at tryptophan 196–arginine 386 folds into the GMPS ATP-PPase domain. Residue serine 223–serine 229 participates in ATP binding.

In terms of assembly, homodimer.

The enzyme catalyses XMP + L-glutamine + ATP + H2O = GMP + L-glutamate + AMP + diphosphate + 2 H(+). Its pathway is purine metabolism; GMP biosynthesis; GMP from XMP (L-Gln route): step 1/1. Its function is as follows. Catalyzes the synthesis of GMP from XMP. The protein is GMP synthase [glutamine-hydrolyzing] of Aliarcobacter butzleri (strain RM4018) (Arcobacter butzleri).